Reading from the N-terminus, the 217-residue chain is Uridylate kinase (217 aa).

An ATP-binding site is contributed by 6-10 (KLSGR). Gly38 is a UMP binding site. The ATP site is built by Gly39 and Arg43. UMP contacts are provided by residues Asp60 and 107–113 (FQPGQST). Residues Asn134, Tyr139, and Asp142 each contribute to the ATP site.

Belongs to the UMP kinase family. As to quaternary structure, homohexamer.

It is found in the cytoplasm. It catalyses the reaction UMP + ATP = UDP + ADP. Its pathway is pyrimidine metabolism; CTP biosynthesis via de novo pathway; UDP from UMP (UMPK route): step 1/1. Inhibited by UTP. Functionally, catalyzes the reversible phosphorylation of UMP to UDP. This chain is Uridylate kinase, found in Pyrobaculum islandicum (strain DSM 4184 / JCM 9189 / GEO3).